A 181-amino-acid polypeptide reads, in one-letter code: MKQLLDFLPLVIFFAVYKFFDIYIASGALIAATALQLVVTYALYKKLEKMHLITFAMVTVFGTLTLVFHDDAFIKWKVTIIYALFALALGVSQLLNKSILKSMLGKEMKVADNIWAHVTWYWVSFFAICGLVNIYVAFSLPLETWVNFKVFGLTALTLINTVITVFYLYKHLPEDQRKELK.

The next 5 membrane-spanning stretches (helical) occupy residues 10-30 (LVIF…GALI), 50-70 (MHLI…VFHD), 72-92 (AFIK…LGVS), 118-138 (VTWY…YVAF), and 148-168 (FKVF…VFYL).

This sequence belongs to the YciB family.

It is found in the cell inner membrane. Functionally, plays a role in cell envelope biogenesis, maintenance of cell envelope integrity and membrane homeostasis. The protein is Inner membrane-spanning protein YciB of Shewanella oneidensis (strain ATCC 700550 / JCM 31522 / CIP 106686 / LMG 19005 / NCIMB 14063 / MR-1).